The following is a 305-amino-acid chain: Glycine--tRNA ligase alpha subunit (305 aa).

Belongs to the class-II aminoacyl-tRNA synthetase family. In terms of assembly, tetramer of two alpha and two beta subunits.

It localises to the cytoplasm. It carries out the reaction tRNA(Gly) + glycine + ATP = glycyl-tRNA(Gly) + AMP + diphosphate. The protein is Glycine--tRNA ligase alpha subunit of Streptococcus pneumoniae (strain P1031).